The sequence spans 567 residues: PEX5-related protein (567 aa).

Residues 56-105 (SEPVSQPQTKAKKSEPSSKSSSLKKKADGSDLISADAEQRAQALRGPETS) are disordered. Residue Ser-146 is modified to Phosphoserine. The segment at 150 to 169 (LWSAEHRSQPELSTGKSALN) is disordered. Phosphoserine occurs at positions 194, 198, and 202. 3 TPR repeats span residues 267 to 300 (WPGAFEEGLKRLKEGDLPVTILFMEAAILQDPGD), 301 to 334 (AEAWQFLGITQAENENEQAAIVALQRCLELQPNN), and 336 to 368 (KALMALAVSYTNTSHQQDACEALKNWIKQNPKY). Ser-386 and Ser-388 each carry phosphoserine. TPR repeat units lie at residues 415–448 (PDLQTGLGVLFHLSGEFNRAIDAFNAALTVRPED), 450–482 (SLWNRLGATLANGDRSEEAVEAYTRALEIQPGF), and 484–516 (RSRYNLGISCINLGAYREAVSNFLTALSLQRKS).

Belongs to the peroxisomal targeting signal receptor family. Interacts with RAB8B. Forms an obligate 4:4 complex with HCN2. Interacts with HCN3. Interacts with HCN4 with a 4:4 HCN4:PEX5L stoichiometry; reduces the effects of cAMP on the voltage-dependence and rate of activation of HCN4.

The protein resides in the cytoplasm. It localises to the membrane. In terms of biological role, accessory subunit of hyperpolarization-activated cyclic nucleotide-gated (HCN) channels, regulating their cell-surface expression and cyclic nucleotide dependence. This chain is PEX5-related protein (Pex5l), found in Mus musculus (Mouse).